Consider the following 71-residue polypeptide: MAKQSAIEQDGSIIEALSNAMFRVELENGHIVIAHISGKMRMHYIKLLPGDKVKLEMSPYDLSKARITYRY.

The S1-like domain maps to 1 to 71 (MAKQSAIEQD…LSKARITYRY (71 aa)).

It belongs to the IF-1 family. As to quaternary structure, component of the 30S ribosomal translation pre-initiation complex which assembles on the 30S ribosome in the order IF-2 and IF-3, IF-1 and N-formylmethionyl-tRNA(fMet); mRNA recruitment can occur at any time during PIC assembly.

It localises to the cytoplasm. Its function is as follows. One of the essential components for the initiation of protein synthesis. Stabilizes the binding of IF-2 and IF-3 on the 30S subunit to which N-formylmethionyl-tRNA(fMet) subsequently binds. Helps modulate mRNA selection, yielding the 30S pre-initiation complex (PIC). Upon addition of the 50S ribosomal subunit IF-1, IF-2 and IF-3 are released leaving the mature 70S translation initiation complex. The polypeptide is Translation initiation factor IF-1 (Flavobacterium johnsoniae (strain ATCC 17061 / DSM 2064 / JCM 8514 / BCRC 14874 / CCUG 350202 / NBRC 14942 / NCIMB 11054 / UW101) (Cytophaga johnsonae)).